The following is a 182-amino-acid chain: T-cell surface glycoprotein CD3 gamma chain (182 aa).

The N-terminal stretch at 1-22 (MEQGKGLAVLILAIILLQGTLA) is a signal peptide. Over 23 to 116 (QSIKGNHLVK…CIELNAATIS (94 aa)) the chain is Extracellular. The region spanning 37–94 (QEDGSVLLTCDAEAKNITWFKDGKMIGFLTEDKKKWNLGSNAKDPRGMYQCKGSQNKS) is the Ig-like domain. Cysteine 46 and cysteine 87 form a disulfide bridge. Asparagine 52 and asparagine 92 each carry an N-linked (GlcNAc...) asparagine glycan. A helical membrane pass occupies residues 117–137 (GFLFAEIVSIFVLAVGVYFIA). The Cytoplasmic segment spans residues 138-182 (GQDGVRQSRASDKQTLLPNDQLYQPLKDREDDQYSHLQGNQLRRN). At serine 145 the chain carries Phosphoserine. Serine 148 is modified (phosphoserine; by PKC). The region spanning 149–177 (DKQTLLPNDQLYQPLKDREDDQYSHLQGN) is the ITAM domain. The Di-leucine motif motif lies at 153–154 (LL).

In terms of assembly, the TCR-CD3 complex is composed of a CD3D/CD3E and a CD3G/CD3E heterodimers that preferentially associate with TCRalpha and TCRbeta, respectively, to form TCRalpha/CD3E/CD3G and TCRbeta/CD3G/CD3E trimers. In turn, the hexamer interacts with CD3Z homodimer to form the TCR-CD3 complex. Alternatively, TCRalpha and TCRbeta can be replaced by TCRgamma and TCRdelta. In terms of processing, phosphorylated on Tyr residues after T-cell receptor triggering by LCK in association with CD4/CD8. Phosphorylated also by PKC; leading to the TCR complex down-regulation. Post-translationally, phosphorylated on Tyr residues after T-cell receptor triggering by LCK in association with CD4/CD8.

The protein localises to the cell membrane. In terms of biological role, part of the TCR-CD3 complex present on T-lymphocyte cell surface that plays an essential role in adaptive immune response. When antigen presenting cells (APCs) activate T-cell receptor (TCR), TCR-mediated signals are transmitted across the cell membrane by the CD3 chains CD3D, CD3E, CD3G and CD3Z. All CD3 chains contain immunoreceptor tyrosine-based activation motifs (ITAMs) in their cytoplasmic domain. Upon TCR engagement, these motifs become phosphorylated by Src family protein tyrosine kinases LCK and FYN, resulting in the activation of downstream signaling pathways. In addition to this role of signal transduction in T-cell activation, CD3G plays an essential role in the dynamic regulation of TCR expression at the cell surface. Indeed, constitutive TCR cycling is dependent on the di-leucine-based (diL) receptor-sorting motif present in CD3G. The sequence is that of T-cell surface glycoprotein CD3 gamma chain (CD3G) from Homo sapiens (Human).